The following is a 147-amino-acid chain: MSGSKSPKGEFAGRKIVLKRKESRWHHYKYVNKALKLKEKSDPLGGAPMGRGIVVEKVGLEAKQPNSAIRKCVKVQLIKNGRVVTAFAPGNHAINFIDEHDEVVIEGIGGPSGQAKGDIPGVRFRVVMVGKNSMRELVRGRQEKVRR.

It belongs to the universal ribosomal protein uS12 family. Part of the 30S ribosomal subunit.

With S4 and S5 plays an important role in translational accuracy. Located at the interface of the 30S and 50S subunits. The protein is Small ribosomal subunit protein uS12 of Methanococcus aeolicus (strain ATCC BAA-1280 / DSM 17508 / OCM 812 / Nankai-3).